We begin with the raw amino-acid sequence, 164 residues long: Interleukin-36 beta (164 aa).

Residues 1 to 4 (MNPQ) constitute a propeptide that is removed on maturation.

Belongs to the IL-1 family. In terms of assembly, interacts with cargo receptor TMED10; the interaction mediates the translocation from the cytoplasm into the ERGIC (endoplasmic reticulum-Golgi intermediate compartment) and thereby secretion. In terms of processing, N-terminal truncation leads to a dramatic enhancement of its activity (&gt;1000-fold). As to expression, expression at low levels in tonsil, bone marrow, heart, placenta, lung, testis and colon but not in any hematopoietic cell lines. Not detected in adipose tissue. Expressed at higher levels in psoriatic plaques than in symptomless psoriatic skin or healthy control skin. Increased levels are not detected in inflamed joint tissue.

The protein resides in the cytoplasm. Its subcellular location is the secreted. Functionally, cytokine that binds to and signals through the IL1RL2/IL-36R receptor which in turn activates NF-kappa-B and MAPK signaling pathways in target cells linked to a pro-inflammatory response. Part of the IL-36 signaling system that is thought to be present in epithelial barriers and to take part in local inflammatory response; similar to the IL-1 system with which it shares the coreceptor IL1RAP. Stimulates production of interleukin-6 and interleukin-8 in synovial fibrobasts, articular chondrocytes and mature adipocytes. Induces expression of a number of antimicrobial peptides including beta-defensins 4 and 103 as well as a number of matrix metalloproteases. Seems to be involved in skin inflammatory response by acting on keratinocytes, dendritic cells and indirectly on T-cells to drive tissue infiltration, cell maturation and cell proliferation. In cultured keratinocytes induces the expression of macrophage, T-cell, and neutrophil chemokines, such as CCL3, CCL4, CCL5, CCL2, CCL17, CCL22, CL20, CCL5, CCL2, CCL17, CCL22, CXCL8, CCL20 and CXCL1, and the production of pro-inflammatory cytokines such as TNF-alpha, IL-8 and IL-6. The protein is Interleukin-36 beta of Homo sapiens (Human).